The primary structure comprises 318 residues: Mitochondrial coenzyme A transporter SLC25A42 (318 aa).

Solcar repeat units lie at residues 31 to 117 (RQVL…YKRI), 129 to 214 (LPPW…LKSL), and 224 to 312 (PYPF…MQIL). 6 consecutive transmembrane segments (helical) span residues 33–53 (VLSS…AVAP), 89–109 (LWRG…IQFS), 135–155 (LLAG…LDLV), 186–206 (LYFG…LSFF), 230–250 (MVFG…LDVV), and 293–313 (LKGP…QILL).

Belongs to the mitochondrial carrier (TC 2.A.29) family. Widely expressed. Highly expressed in adipose, followed by hypothalamus and brain coronal sections containing corpus callosum, fornix, thalamus, hypothalamus, optic chiasm, pons, midbrain, and cerebellum.

The protein localises to the mitochondrion inner membrane. It catalyses the reaction ADP(out) + CoA(in) = ADP(in) + CoA(out). It carries out the reaction 3'-dephospho-CoA(in) + ADP(out) = 3'-dephospho-CoA(out) + ADP(in). The catalysed reaction is adenosine 3',5'-bisphosphate(in) + ADP(out) = adenosine 3',5'-bisphosphate(out) + ADP(in). The enzyme catalyses AMP(in) + ADP(out) = AMP(out) + ADP(in). It catalyses the reaction dADP(in) + ADP(out) = dADP(out) + ADP(in). It carries out the reaction ADP(in) + ATP(out) = ADP(out) + ATP(in). Mitochondrial carrier mediating the transport of coenzyme A (CoA) in mitochondria in exchange for intramitochondrial (deoxy)adenine nucleotides and adenosine 3',5'-diphosphate. This chain is Mitochondrial coenzyme A transporter SLC25A42 (Slc25a42), found in Rattus norvegicus (Rat).